Here is a 92-residue protein sequence, read N- to C-terminus: Small ribosomal subunit protein uS19 (92 aa).

Belongs to the universal ribosomal protein uS19 family.

Its function is as follows. Protein S19 forms a complex with S13 that binds strongly to the 16S ribosomal RNA. This is Small ribosomal subunit protein uS19 from Oceanobacillus iheyensis (strain DSM 14371 / CIP 107618 / JCM 11309 / KCTC 3954 / HTE831).